The following is a 450-amino-acid chain: Molybdate-anion transporter (450 aa).

Helical transmembrane passes span 1-21, 43-63, 79-99, 128-148, 174-194, 195-215, 249-269, 278-298, 311-331, 344-364, 376-396, and 409-429; these read MLVT…GLEL, LDFY…APYL, ILYV…SSLV, FVLL…FSAF, AAFW…AVAS, WIGL…ALAG, VLLL…FVFL, GAPL…GSSL, PMHL…MLTF, FIAF…MSFL, GVLN…LLVL, and FSIC…LFTV.

The protein belongs to the major facilitator superfamily. As to expression, expressed ubiquitously but at relatively higher levels in the olfactory bulb and the skeletal muscle.

It is found in the cell membrane. Mediates high-affinity intracellular uptake of the rare oligo-element molybdenum. This is Molybdate-anion transporter (MFSD5) from Homo sapiens (Human).